We begin with the raw amino-acid sequence, 432 residues long: MEVMDHHHHTSSTRPNPTTRRMNFFLPNAIHMDSHLLYYRPQPGYGAPPPQGGYGYPQPPPPQQPYGYSQPPPQQYGGYNGVPPNAPQYGRPGMPSVNSNAYINGNQNAPPPPPQGMHSFGQGAPQNYAFQYSNCTGRRKALLIGINYFGQRGQLRGCINDVKNMSSYLHENFGYQRDDMVILTDDQQNPMSQPTKQNILRAMHWLVKDARPNDSLFFHYSGHGGQTKDLDGDEEDGYDEVIYPVDFRQVGHIVDDEMHRIMVQPLQPGVRLTAIFDSCHSGTALDLPYVYSTQGVLKEPNLAKEAGQGLLGVISSYSQGDMSGVASNLMGFFKKATTGDDAYNKTLATKTSPADVVMWSGSKDDQTSADATIAAQATGAMSWAFITAMKKNPQQSYVQLLNSIRDELATKYTQKPQLSCSHPLSMVPPLLL.

The span at 1-11 (MEVMDHHHHTS) shows a compositional bias: basic residues. 2 disordered regions span residues 1–21 (MEVM…TTRR) and 41–87 (PQPG…PNAP). Residues 12–21 (STRPNPTTRR) are compositionally biased toward low complexity. Positions 46-74 (GAPPPQGGYGYPQPPPPQQPYGYSQPPPQ) are enriched in pro residues. Residues His-223 and Cys-279 contribute to the active site.

It belongs to the peptidase C14B family.

Its function is as follows. Involved in cell death (apoptosis). The polypeptide is Metacaspase-1 (casA) (Sclerotinia sclerotiorum (strain ATCC 18683 / 1980 / Ss-1) (White mold)).